A 412-amino-acid chain; its full sequence is Multifunctional CCA protein (412 aa).

ATP contacts are provided by G8 and R11. CTP-binding residues include G8 and R11. Mg(2+) is bound by residues D21 and D23. R91, R137, and R140 together coordinate ATP. CTP-binding residues include R91, R137, and R140. The region spanning 228–329 (TGIHTLMTLS…VKLFDSIDAW (102 aa)) is the HD domain.

This sequence belongs to the tRNA nucleotidyltransferase/poly(A) polymerase family. Bacterial CCA-adding enzyme type 1 subfamily. In terms of assembly, monomer. Can also form homodimers and oligomers. Mg(2+) is required as a cofactor. The cofactor is Ni(2+).

The enzyme catalyses a tRNA precursor + 2 CTP + ATP = a tRNA with a 3' CCA end + 3 diphosphate. It carries out the reaction a tRNA with a 3' CCA end + 2 CTP + ATP = a tRNA with a 3' CCACCA end + 3 diphosphate. Catalyzes the addition and repair of the essential 3'-terminal CCA sequence in tRNAs without using a nucleic acid template. Adds these three nucleotides in the order of C, C, and A to the tRNA nucleotide-73, using CTP and ATP as substrates and producing inorganic pyrophosphate. tRNA 3'-terminal CCA addition is required both for tRNA processing and repair. Also involved in tRNA surveillance by mediating tandem CCA addition to generate a CCACCA at the 3' terminus of unstable tRNAs. While stable tRNAs receive only 3'-terminal CCA, unstable tRNAs are marked with CCACCA and rapidly degraded. The protein is Multifunctional CCA protein of Escherichia coli O1:K1 / APEC.